The following is a 200-amino-acid chain: MRIVLVGPPGAGKGTQATRLAETLHIPHISTGDLFRANISQQTELGKLAKSYMDAGNLVPDEVTIAMDRTAWSSPTPRAFLLDGFPRNVSQAEALDELLETEDMKLDAVLDLEAPEDEVVKRIAGRRVCRNDSAHVFHVTYTPPKKEGVCDVCGGELYQRDDDSEETVRKRLEVYHTQTEPIIDYYKSQGLVATIAATGP.

10–15 contacts ATP; it reads GAGKGT. Residues 30 to 59 are NMP; that stretch reads STGDLFRANISQQTELGKLAKSYMDAGNLV. AMP contacts are provided by residues threonine 31, arginine 36, 57 to 59, 84 to 87, and glutamine 91; these read NLV and GFPR. Residues 125–163 are LID; sequence GRRVCRNDSAHVFHVTYTPPKKEGVCDVCGGELYQRDDD. ATP-binding positions include arginine 126 and 136-137; that span reads VF. Positions 160 and 171 each coordinate AMP.

Belongs to the adenylate kinase family. As to quaternary structure, monomer.

It is found in the cytoplasm. The catalysed reaction is AMP + ATP = 2 ADP. Its pathway is purine metabolism; AMP biosynthesis via salvage pathway; AMP from ADP: step 1/1. Catalyzes the reversible transfer of the terminal phosphate group between ATP and AMP. Plays an important role in cellular energy homeostasis and in adenine nucleotide metabolism. The sequence is that of Adenylate kinase from Streptomyces lividans.